A 417-amino-acid polypeptide reads, in one-letter code: Gap junction alpha-3 protein (417 aa).

The stretch at 2 to 15 is an intramembrane region; the sequence is GDWSFLGRLLENAQ. Residues 16 to 19 are Cytoplasmic-facing; sequence EHST. The helical transmembrane segment at 20 to 40 threads the bilayer; the sequence is VIGKVWLTVLFIFRILVLGAA. The Extracellular portion of the chain corresponds to 41–71; sequence AEEVWGDEQSDFTCNTQQPGCENVCYDRAFP. Cystine bridges form between cysteine 54-cysteine 198, cysteine 61-cysteine 192, and cysteine 65-cysteine 187. Residues 72-92 traverse the membrane as a helical segment; the sequence is ISHIRFWALQIIFVSTPTLIY. At 93–158 the chain is on the cytoplasmic side; that stretch reads LGHVLHIVRM…GALLRTYVFN (66 aa). Residues 110 to 128 show a composition bias toward basic and acidic residues; it reads EEELLRRDNPQHGRGREPM. A disordered region spans residues 110-141; the sequence is EEELLRRDNPQHGRGREPMRTGSPRDPPLRDD. A helical membrane pass occupies residues 159–179; that stretch reads IIFKTLFEVGFIAGQYFLYGF. The Extracellular portion of the chain corresponds to 180 to 207; the sequence is QLQPLYRCDRWPCPNTVDCFISRPTEKT. The helical transmembrane segment at 208-228 threads the bilayer; it reads IFVIFMLAVACASLVLNMLEI. Residues 229 to 417 lie on the Cytoplasmic side of the membrane; it reads YHLGWKKLKQ…GRARPGDLAI (189 aa). Disordered regions lie at residues 247 to 267 and 334 to 417; these read DASEARHKPLDPLPTATSSGP and RQVA…DLAI. Residues 342 to 353 show a composition bias toward low complexity; it reads PASKPSSAASSP.

The protein belongs to the connexin family. Alpha-type (group II) subfamily. As to quaternary structure, a hemichannel or connexon is composed of a hexamer of connexins. A functional gap junction is formed by the apposition of two hemichannels. Forms heteromeric channels with GJA8.

Its subcellular location is the cell membrane. It is found in the cell junction. The protein localises to the gap junction. Its function is as follows. Structural component of lens fiber gap junctions. Gap junctions are dodecameric channels that connect the cytoplasm of adjoining cells. They are formed by the docking of two hexameric hemichannels, one from each cell membrane. Small molecules and ions diffuse from one cell to a neighboring cell via the central pore. The sequence is that of Gap junction alpha-3 protein (Gja3) from Mus musculus (Mouse).